A 59-amino-acid polypeptide reads, in one-letter code: Large ribosomal subunit protein bL32c (59 aa).

Residues 1–20 form a disordered region; the sequence is MAVPKKRTSKSKKRIRKSVW.

It belongs to the bacterial ribosomal protein bL32 family.

Its subcellular location is the plastid. The protein localises to the chloroplast. This is Large ribosomal subunit protein bL32c from Angiopteris evecta (Mule's foot fern).